A 1010-amino-acid chain; its full sequence is Sodium/potassium-transporting ATPase subunit alpha-3 (1010 aa).

Residues 1 to 21 form a disordered region; it reads MGDKGEKESPKKGKGKRDLDD. The Cytoplasmic portion of the chain corresponds to 1-74; the sequence is MGDKGEKESP…NALTPPPTTP (74 aa). The segment at 69-71 is interaction with phosphoinositide-3 kinase; the sequence is PPP. A helical transmembrane segment spans residues 75-95; that stretch reads EWVKFCRQLFGGFSILLWIGA. Over 96–118 the chain is Extracellular; sequence ILCFLAYGIQAGTEDEPSNDNLY. Residues 119-139 form a helical membrane-spanning segment; the sequence is LGIVLAAVVIITGCFSYYQEA. Residues 140–275 lie on the Cytoplasmic side of the membrane; it reads KSSKIMESFK…VGKTPIAVEI (136 aa). A helical membrane pass occupies residues 276–295; sequence EHFIQLITGVAVFLGISFFV. At 296–307 the chain is on the extracellular side; sequence LSLILGYTWLEA. A helical transmembrane segment spans residues 308–325; it reads VIFLIGIIVANVPEGLLA. The Cytoplasmic portion of the chain corresponds to 326–759; that stretch reads TVTVCLTLTA…EEGRLIFDNL (434 aa). The active-site 4-aspartylphosphate intermediate is the Asp363. 2 residues coordinate Mg(2+): Asp704 and Asp708. A helical membrane pass occupies residues 760-779; it reads KKSIAYTLTSNIPEITPFLL. Residues 780-789 lie on the Extracellular side of the membrane; it reads FIMANIPLPL. A helical transmembrane segment spans residues 790-810; it reads GTITILCIDLGTDMVPAISLA. Residues 811 to 830 lie on the Cytoplasmic side of the membrane; the sequence is YEAAESDIMKRQPRNPRSDK. A helical transmembrane segment spans residues 831-853; it reads LVNERLISMAYGQIGMIQALGGF. Residues 854 to 905 are Extracellular-facing; it reads FSYFVILAENGFLPSCLVGIRLSWDDRTINDLEDSYGQQWTYEQRKVVEFTC. The helical transmembrane segment at 906–925 threads the bilayer; that stretch reads HTAFFVSIVVVQWADLIICK. Topologically, residues 926–938 are cytoplasmic; that stretch reads TRRNSVFQQGMKN. Phosphoserine; by PKA is present on Ser930. Residues 939–957 form a helical membrane-spanning segment; it reads KILIFGLFEETALAAFLSY. The Extracellular portion of the chain corresponds to 958-972; that stretch reads CPGMDVALRMYPLKP. A helical transmembrane segment spans residues 973–993; that stretch reads SWWFCAFPYSFLIFVYDEIRK. Residues 994–1010 are Cytoplasmic-facing; it reads LILRRNPGGWVEKETYY.

This sequence belongs to the cation transport ATPase (P-type) (TC 3.A.3) family. Type IIC subfamily. As to quaternary structure, the sodium/potassium-transporting ATPase is composed of a catalytic alpha subunit, an auxiliary non-catalytic beta subunit and an additional regulatory subunit.

It is found in the cell membrane. The catalysed reaction is K(+)(out) + Na(+)(in) + ATP + H2O = K(+)(in) + Na(+)(out) + ADP + phosphate + H(+). In terms of biological role, this is the catalytic component of the active enzyme, which catalyzes the hydrolysis of ATP coupled with the exchange of sodium and potassium ions across the plasma membrane. This action creates the electrochemical gradient of sodium and potassium ions, providing the energy for active transport of various nutrients. In Gallus gallus (Chicken), this protein is Sodium/potassium-transporting ATPase subunit alpha-3 (ATP1A3).